A 467-amino-acid polypeptide reads, in one-letter code: Serine decarboxylase 2 (467 aa).

Histidine 178 contacts substrate. Position 290 is an N6-(pyridoxal phosphate)lysine (lysine 290).

It belongs to the group II decarboxylase family. Pyridoxal 5'-phosphate is required as a cofactor.

It carries out the reaction L-serine + H(+) = ethanolamine + CO2. Catalyzes the biosynthesis of ethanolamine from serine. Decarboxylation of free serine is the major source of ethanolamine production in plants and ethanolamine metabolism is crucial for the synthesis of choline, phosphatidylethanolamine (PE) and phosphatidylcholine (PC), and thus for plant growth. The polypeptide is Serine decarboxylase 2 (Oryza sativa subsp. japonica (Rice)).